We begin with the raw amino-acid sequence, 226 residues long: MHLTKEKFIKLSMISSIIILCIAIVSVILFGVQQFKIGSQLASVNQVSNLSHLLIRQQANLLSMLLVNNASTEQLTESLDAFAKEEFVLDASIYSNRGELLAHTSHFQNLRLTLGLNSPTQPDEENTQQIVEPIYSLNGIEGFLRVTFDSKYGKTTQSKIDHLFHQLYGELIIIFLAGVLLASSIHYFLSHYRRTYRKVTENKAVKVLKTKQNVGNYHRRRRRLNK.

Transmembrane regions (helical) follow at residues 12–32 and 169–189; these read SMIS…LFGV and GELI…HYFL.

It belongs to the Smp family.

The protein localises to the cell inner membrane. Its function is as follows. When anaerobically expressed in wild-type E.coli K12 confers a hemolytic phenotype, but not in an sheA mutant. Suggests it affects the expression of the latent E.coli K12 hemolysin sheA under anaerobic conditions. In Pasteurella multocida (strain Pm70), this protein is Protein AhpA (ahpA).